The following is a 381-amino-acid chain: N-acetylglucosamine-6-phosphate deacetylase (381 aa).

E129 is an a divalent metal cation binding site. Residue 140-141 participates in substrate binding; that stretch reads VH. H193 and H214 together coordinate a divalent metal cation. Substrate is bound by residues 217–218, R226, and 246–249; these read NA and DGVH. Catalysis depends on D271, which acts as the Proton donor/acceptor. Residue 306–308 coordinates substrate; it reads IAG.

This sequence belongs to the metallo-dependent hydrolases superfamily. NagA family. As to quaternary structure, homotetramer. The cofactor is a divalent metal cation.

It catalyses the reaction N-acetyl-D-glucosamine 6-phosphate + H2O = D-glucosamine 6-phosphate + acetate. It functions in the pathway amino-sugar metabolism; N-acetylneuraminate degradation; D-fructose 6-phosphate from N-acetylneuraminate: step 4/5. Functionally, involved in the first committed step in the biosynthesis of amino-sugar-nucleotides. Catalyzes the hydrolysis of the N-acetyl group of N-acetylglucosamine-6-phosphate (GlcNAc-6-P) to yield glucosamine 6-phosphate and acetate. This Haemophilus influenzae (strain ATCC 51907 / DSM 11121 / KW20 / Rd) protein is N-acetylglucosamine-6-phosphate deacetylase (nagA).